A 277-amino-acid chain; its full sequence is Putative phosphoenolpyruvate synthase regulatory protein (277 aa).

152-159 lines the ADP pocket; sequence GVSRCGKT.

This sequence belongs to the pyruvate, phosphate/water dikinase regulatory protein family. PSRP subfamily.

The catalysed reaction is [pyruvate, water dikinase] + ADP = [pyruvate, water dikinase]-phosphate + AMP + H(+). The enzyme catalyses [pyruvate, water dikinase]-phosphate + phosphate + H(+) = [pyruvate, water dikinase] + diphosphate. Bifunctional serine/threonine kinase and phosphorylase involved in the regulation of the phosphoenolpyruvate synthase (PEPS) by catalyzing its phosphorylation/dephosphorylation. The sequence is that of Putative phosphoenolpyruvate synthase regulatory protein from Chromohalobacter salexigens (strain ATCC BAA-138 / DSM 3043 / CIP 106854 / NCIMB 13768 / 1H11).